The sequence spans 490 residues: Ent-kaurenoic acid oxidase 1 (490 aa).

A helical membrane pass occupies residues Ser-6–Val-26. Position 439 (Cys-439) interacts with heme.

This sequence belongs to the cytochrome P450 family. Requires heme as cofactor. As to expression, widely expressed. Highly expressed in influorescence stem, influorescence, and silique tissue. Weakly expressed in cauline and rosette leaves. Expressed at a higher level in stem and influorescence than AtKAO2/CYP88A4.

It localises to the endoplasmic reticulum membrane. It catalyses the reaction ent-kaur-16-en-19-oate + 3 reduced [NADPH--hemoprotein reductase] + 3 O2 = gibberellin A12 + 3 oxidized [NADPH--hemoprotein reductase] + 4 H2O + 4 H(+). The catalysed reaction is ent-kaur-16-en-19-oate + reduced [NADPH--hemoprotein reductase] + O2 = ent-7alpha-hydroxykaur-16-en-19-oate + oxidized [NADPH--hemoprotein reductase] + H2O + H(+). The enzyme catalyses ent-7alpha-hydroxykaur-16-en-19-oate + reduced [NADPH--hemoprotein reductase] + O2 = gibberellin A12 aldehyde + oxidized [NADPH--hemoprotein reductase] + 2 H2O + H(+). It carries out the reaction gibberellin A12 aldehyde + reduced [NADPH--hemoprotein reductase] + O2 = gibberellin A12 + oxidized [NADPH--hemoprotein reductase] + H2O + 2 H(+). It participates in plant hormone biosynthesis; gibberellin biosynthesis. Catalyzes three successive oxidations of ent-kaurenoic acid giving gibberellin 12 (GA12), a key step in gibberellins (GAs) biosynthesis. GAs, which are involved many processes, including stem elongation, play a central role in plant development. The sequence is that of Ent-kaurenoic acid oxidase 1 from Arabidopsis thaliana (Mouse-ear cress).